Consider the following 178-residue polypeptide: Large ribosomal subunit protein uL6 (178 aa).

The protein belongs to the universal ribosomal protein uL6 family. As to quaternary structure, part of the 50S ribosomal subunit.

Its function is as follows. This protein binds to the 23S rRNA, and is important in its secondary structure. It is located near the subunit interface in the base of the L7/L12 stalk, and near the tRNA binding site of the peptidyltransferase center. The protein is Large ribosomal subunit protein uL6 of Staphylococcus saprophyticus subsp. saprophyticus (strain ATCC 15305 / DSM 20229 / NCIMB 8711 / NCTC 7292 / S-41).